A 155-amino-acid polypeptide reads, in one-letter code: Large ribosomal subunit protein uL11 (155 aa).

It belongs to the universal ribosomal protein uL11 family. In terms of assembly, part of the ribosomal stalk of the 50S ribosomal subunit. Interacts with L10 and the large rRNA to form the base of the stalk. L10 forms an elongated spine to which L12 dimers bind in a sequential fashion forming a multimeric L10(L12)X complex.

In terms of biological role, forms part of the ribosomal stalk which helps the ribosome interact with GTP-bound translation factors. This chain is Large ribosomal subunit protein uL11, found in Picrophilus torridus (strain ATCC 700027 / DSM 9790 / JCM 10055 / NBRC 100828 / KAW 2/3).